We begin with the raw amino-acid sequence, 159 residues long: Immunoglobulin J chain (159 aa).

An N-terminal signal peptide occupies residues 1–21 (MKTHLLLWGVLAIFVKAVLVT). 3 disulfide bridges follow: C34–C123, C93–C113, and C131–C156. An N-linked (GlcNAc...) (complex) asparagine glycan is attached at N70.

Part of the secretory IgA (sIgA) complex that consists of two, four or five IgA monomers, and two additional non-Ig polypeptides, namely the JCHAIN and the secretory component (the proteolytic product of PIGR). Part of the secretory IgM (sIgM) complex that consist of five IgM monomers, and two additional non-Ig polypeptides, namely the JCHAIN and the secretory component (the proteolytic product of PIGR). JCHAIN-containing IgM interacts (via CH4 domain) with FCRM (via Ig-like domain).

It is found in the secreted. In terms of biological role, serves to link two monomer units of either IgM or IgA. In the case of IgM, the J chain-joined dimer is a nucleating unit for the IgM pentamer, and in the case of IgA it induces dimers and/or larger polymers. It also helps to bind these immunoglobulins to secretory component. This Mus musculus (Mouse) protein is Immunoglobulin J chain.